Consider the following 138-residue polypeptide: Gas vesicle protein A (138 aa).

The disordered stretch occupies residues 74 to 138 (EAGPRKDPGL…STSRKKEEQE (65 aa)). A compositionally biased stretch (low complexity) spans 116-129 (GSSSGSSSGSSSRS).

Belongs to the gas vesicle GvpA family. As to quaternary structure, the gas vesicle shell is 2 nm thick and consists of a single layer of this protein. It forms helical ribs nearly perpendicular to the long axis of the vesicle.

It localises to the gas vesicle shell. Its function is as follows. Gas vesicles are hollow, gas filled proteinaceous nanostructures found in some microorganisms. During planktonic growth they allow positioning of the organism at a favorable depth for light or nutrient acquisition. GvpA forms the protein shell. It is not clear what function gas vesicles perform in soil bacteria. The polypeptide is Gas vesicle protein A (Streptomyces sp. (strain CB03234)).